A 249-amino-acid chain; its full sequence is Phosphate import ATP-binding protein PstB 2 (249 aa).

In terms of domain architecture, ABC transporter spans Phe-4–Val-244. Gly-36–Ser-43 provides a ligand contact to ATP.

The protein belongs to the ABC transporter superfamily. Phosphate importer (TC 3.A.1.7) family. As to quaternary structure, the complex is composed of two ATP-binding proteins (PstB), two transmembrane proteins (PstC and PstA) and a solute-binding protein (PstS).

It localises to the cell inner membrane. It catalyses the reaction phosphate(out) + ATP + H2O = ADP + 2 phosphate(in) + H(+). Its function is as follows. Part of the ABC transporter complex PstSACB involved in phosphate import. Responsible for energy coupling to the transport system. In Shewanella oneidensis (strain ATCC 700550 / JCM 31522 / CIP 106686 / LMG 19005 / NCIMB 14063 / MR-1), this protein is Phosphate import ATP-binding protein PstB 2.